Consider the following 250-residue polypeptide: 2,3-bisphosphoglycerate-dependent phosphoglycerate mutase (250 aa).

Residues 10 to 17, 23 to 24, Arg-62, 89 to 92, Lys-100, 116 to 117, and 185 to 186 contribute to the substrate site; these read RHGESQWN, TG, ERHY, RR, and GN. Catalysis depends on His-11, which acts as the Tele-phosphohistidine intermediate. Glu-89 serves as the catalytic Proton donor/acceptor.

Belongs to the phosphoglycerate mutase family. BPG-dependent PGAM subfamily. In terms of assembly, homodimer.

It carries out the reaction (2R)-2-phosphoglycerate = (2R)-3-phosphoglycerate. The protein operates within carbohydrate degradation; glycolysis; pyruvate from D-glyceraldehyde 3-phosphate: step 3/5. Functionally, catalyzes the interconversion of 2-phosphoglycerate and 3-phosphoglycerate. This chain is 2,3-bisphosphoglycerate-dependent phosphoglycerate mutase, found in Yersinia enterocolitica serotype O:8 / biotype 1B (strain NCTC 13174 / 8081).